The sequence spans 197 residues: Imidazoleglycerol-phosphate dehydratase (197 aa).

It belongs to the imidazoleglycerol-phosphate dehydratase family.

The protein localises to the cytoplasm. The enzyme catalyses D-erythro-1-(imidazol-4-yl)glycerol 3-phosphate = 3-(imidazol-4-yl)-2-oxopropyl phosphate + H2O. It functions in the pathway amino-acid biosynthesis; L-histidine biosynthesis; L-histidine from 5-phospho-alpha-D-ribose 1-diphosphate: step 6/9. This is Imidazoleglycerol-phosphate dehydratase from Nitrosococcus oceani (strain ATCC 19707 / BCRC 17464 / JCM 30415 / NCIMB 11848 / C-107).